Consider the following 173-residue polypeptide: Regulatory protein RecX (173 aa).

The protein belongs to the RecX family.

Its subcellular location is the cytoplasm. Functionally, modulates RecA activity. In Mycobacterium avium (strain 104), this protein is Regulatory protein RecX.